Consider the following 293-residue polypeptide: 33 kDa chaperonin (293 aa).

Cystine bridges form between Cys-231–Cys-233 and Cys-264–Cys-267.

It belongs to the HSP33 family. Under oxidizing conditions two disulfide bonds are formed involving the reactive cysteines. Under reducing conditions zinc is bound to the reactive cysteines and the protein is inactive.

It is found in the cytoplasm. Functionally, redox regulated molecular chaperone. Protects both thermally unfolding and oxidatively damaged proteins from irreversible aggregation. Plays an important role in the bacterial defense system toward oxidative stress. The polypeptide is 33 kDa chaperonin (Yersinia pseudotuberculosis serotype O:1b (strain IP 31758)).